The following is an 807-amino-acid chain: Protein WEAK CHLOROPLAST MOVEMENT UNDER BLUE LIGHT 1 (807 aa).

Residues 1–162 (MEDLKTVEAS…GTPKNVDSHR (162 aa)) form a disordered region. Positions 31-40 (RESNIQSATK) are enriched in polar residues. The span at 46–73 (QSQTDTEETQQSQTDTEETQQSQTDDTT) shows a compositional bias: low complexity. Positions 138–157 (RTVSSPRFSGSPVSTGTPKN) are enriched in polar residues. Ser148 carries the phosphoserine modification. Coiled-coil stretches lie at residues 191 to 429 (RMQA…ELVA), 457 to 489 (DLHA…LKLA), 516 to 621 (IAVA…ALEE), and 664 to 724 (AAVS…WRAE). Disordered regions lie at residues 532-565 (IASV…EAKS) and 722-789 (RAEH…KKKK). 3 stretches are compositionally biased toward basic and acidic residues: residues 537–548 (SKEKDAREKMVE), 722–732 (RAEHEQKRKAG), and 739–749 (KNLKESFEGGK). The span at 761–781 (SSPSESYGTEENSETNLSPQT) shows a compositional bias: polar residues.

This sequence belongs to the WEB family. In terms of assembly, interacts with PMI2. Ubiquitous but preferentially in chloroplast-containing tissues.

It localises to the cytoplasm. Functionally, required for the chloroplast avoidance response under high intensity blue light. This avoidance response consists in the relocation of chloroplasts on the anticlinal side of exposed cells. Acts in association with PMI2 to maintain the velocity of chloroplast photorelocation movement via cp-actin filaments regulation. This chain is Protein WEAK CHLOROPLAST MOVEMENT UNDER BLUE LIGHT 1 (WEB1), found in Arabidopsis thaliana (Mouse-ear cress).